The primary structure comprises 201 residues: FMN-dependent NADH:quinone oxidoreductase (201 aa).

Residues serine 10, serine 16 to serine 18, methionine 96 to phenylalanine 99, and serine 140 to glycine 143 contribute to the FMN site.

It belongs to the azoreductase type 1 family. In terms of assembly, homodimer. It depends on FMN as a cofactor.

It catalyses the reaction 2 a quinone + NADH + H(+) = 2 a 1,4-benzosemiquinone + NAD(+). The catalysed reaction is N,N-dimethyl-1,4-phenylenediamine + anthranilate + 2 NAD(+) = 2-(4-dimethylaminophenyl)diazenylbenzoate + 2 NADH + 2 H(+). In terms of biological role, quinone reductase that provides resistance to thiol-specific stress caused by electrophilic quinones. Also exhibits azoreductase activity. Catalyzes the reductive cleavage of the azo bond in aromatic azo compounds to the corresponding amines. This Escherichia coli O9:H4 (strain HS) protein is FMN-dependent NADH:quinone oxidoreductase.